The following is a 493-amino-acid chain: Cysteine--tRNA ligase (493 aa).

Cys29 is a Zn(2+) binding site. The short motif at 31–41 is the 'HIGH' region element; that stretch reads VTVYDYCHIGH. Zn(2+) contacts are provided by Cys209, His234, and Glu238. The short motif at 266–270 is the 'KMSKS' region element; it reads KMSKS. Residue Lys269 participates in ATP binding.

It belongs to the class-I aminoacyl-tRNA synthetase family. In terms of assembly, monomer. The cofactor is Zn(2+).

The protein localises to the cytoplasm. The enzyme catalyses tRNA(Cys) + L-cysteine + ATP = L-cysteinyl-tRNA(Cys) + AMP + diphosphate. In Pelobacter propionicus (strain DSM 2379 / NBRC 103807 / OttBd1), this protein is Cysteine--tRNA ligase.